Consider the following 236-residue polypeptide: Ascorbate-specific transmembrane electron transporter 1 (236 aa).

The Cytoplasmic segment spans residues 1–11 (MGLGLGVRAAP). A helical membrane pass occupies residues 12-32 (FTYAAHALAVAAAAMVLVWSI). The 205-residue stretch at 15-219 (AAHALAVAAA…FGASVVVAAI (205 aa)) folds into the Cytochrome b561 domain. Residues 33–50 (QFRGGLAIESTNKNLIFN) lie on the Extracellular side of the membrane. A helical transmembrane segment spans residues 51 to 71 (VHPVLMLIGYVIIGGEAIMVY). His-52 contributes to the heme b binding site. 67–75 (AIMVYRVLP) contacts L-ascorbate. The Cytoplasmic segment spans residues 72–84 (RVLPTSNHDTTKL). Residues 85-105 (IHLILHGIALVLGAVGIYFAF) traverse the membrane as a helical segment. The heme b site is built by His-86 and His-120. At 106–122 (KNHNESGIANLYSLHSW) the chain is on the extracellular side. 116 to 125 (LYSLHSWIGI) contributes to the monodehydro-L-ascorbate radical binding site. A helical membrane pass occupies residues 123 to 143 (IGIGTITLYGIQWIIGFVTFF). At 144–153 (FPGAAPNVKK) the chain is on the cytoplasmic side. Residues 154 to 174 (GVLPWHVLFGLFVYILALANA) traverse the membrane as a helical segment. His-159 contacts heme b. Topologically, residues 175–201 (ELGFLEKLTFLESSGLDKYGTEAFLVN) are extracellular. Residues 202 to 222 (FTALVVVLFGASVVVAAIAPV) form a helical membrane-spanning segment. The Cytoplasmic segment spans residues 223–236 (RLEEPQGYDPIPEN).

It depends on heme b as a cofactor.

Its subcellular location is the membrane. With respect to regulation, inhibited by diethylpyrocarbonate. In terms of biological role, two-heme-containing cytochrome. Catalyzes ascorbate-dependent trans-membrane electron transfer by utilizing a concerted H(+)/e(-) transfer mechanism. This chain is Ascorbate-specific transmembrane electron transporter 1 (ZCYB), found in Zea mays (Maize).